Reading from the N-terminus, the 416-residue chain is UDP-N-acetylglucosamine 1-carboxyvinyltransferase (416 aa).

A phosphoenolpyruvate-binding site is contributed by 22-23 (KN). Position 92 (Arg-92) interacts with UDP-N-acetyl-alpha-D-glucosamine. Cys-116 functions as the Proton donor in the catalytic mechanism. The residue at position 116 (Cys-116) is a 2-(S-cysteinyl)pyruvic acid O-phosphothioketal. UDP-N-acetyl-alpha-D-glucosamine is bound by residues Asp-306 and Ile-328.

This sequence belongs to the EPSP synthase family. MurA subfamily.

The protein resides in the cytoplasm. It carries out the reaction phosphoenolpyruvate + UDP-N-acetyl-alpha-D-glucosamine = UDP-N-acetyl-3-O-(1-carboxyvinyl)-alpha-D-glucosamine + phosphate. It functions in the pathway cell wall biogenesis; peptidoglycan biosynthesis. Functionally, cell wall formation. Adds enolpyruvyl to UDP-N-acetylglucosamine. This chain is UDP-N-acetylglucosamine 1-carboxyvinyltransferase, found in Buchnera aphidicola subsp. Baizongia pistaciae (strain Bp).